We begin with the raw amino-acid sequence, 313 residues long: Acetaldehyde dehydrogenase 3 (313 aa).

11-14 (SGNI) serves as a coordination point for NAD(+). Cys129 acts as the Acyl-thioester intermediate in catalysis. NAD(+) is bound by residues 160–168 (SAGPGTRAN) and Asn288.

Belongs to the acetaldehyde dehydrogenase family.

It catalyses the reaction acetaldehyde + NAD(+) + CoA = acetyl-CoA + NADH + H(+). The protein is Acetaldehyde dehydrogenase 3 of Rhizorhabdus wittichii (strain DSM 6014 / CCUG 31198 / JCM 15750 / NBRC 105917 / EY 4224 / RW1) (Sphingomonas wittichii).